The sequence spans 34 residues: Photosystem II reaction center protein M (34 aa).

Residues isoleucine 5–isoleucine 25 traverse the membrane as a helical segment.

The protein belongs to the PsbM family. As to quaternary structure, PSII is composed of 1 copy each of membrane proteins PsbA, PsbB, PsbC, PsbD, PsbE, PsbF, PsbH, PsbI, PsbJ, PsbK, PsbL, PsbM, PsbT, PsbX, PsbY, PsbZ, Psb30/Ycf12, at least 3 peripheral proteins of the oxygen-evolving complex and a large number of cofactors. It forms dimeric complexes.

It is found in the plastid. The protein resides in the chloroplast thylakoid membrane. One of the components of the core complex of photosystem II (PSII). PSII is a light-driven water:plastoquinone oxidoreductase that uses light energy to abstract electrons from H(2)O, generating O(2) and a proton gradient subsequently used for ATP formation. It consists of a core antenna complex that captures photons, and an electron transfer chain that converts photonic excitation into a charge separation. This subunit is found at the monomer-monomer interface. The protein is Photosystem II reaction center protein M of Phaseolus vulgaris (Kidney bean).